Here is a 513-residue protein sequence, read N- to C-terminus: ATP synthase subunit alpha 1 (513 aa).

Position 169–176 (169–176) interacts with ATP; it reads GDRQTGKT.

This sequence belongs to the ATPase alpha/beta chains family. As to quaternary structure, F-type ATPases have 2 components, CF(1) - the catalytic core - and CF(0) - the membrane proton channel. CF(1) has five subunits: alpha(3), beta(3), gamma(1), delta(1), epsilon(1). CF(0) has three main subunits: a(1), b(2) and c(9-12). The alpha and beta chains form an alternating ring which encloses part of the gamma chain. CF(1) is attached to CF(0) by a central stalk formed by the gamma and epsilon chains, while a peripheral stalk is formed by the delta and b chains.

The protein localises to the cell inner membrane. It carries out the reaction ATP + H2O + 4 H(+)(in) = ADP + phosphate + 5 H(+)(out). Functionally, produces ATP from ADP in the presence of a proton gradient across the membrane. The alpha chain is a regulatory subunit. This Photobacterium profundum (strain SS9) protein is ATP synthase subunit alpha 1.